The primary structure comprises 133 residues: Ribonuclease P protein component (133 aa).

Belongs to the RnpA family. Consists of a catalytic RNA component (M1 or rnpB) and a protein subunit.

It carries out the reaction Endonucleolytic cleavage of RNA, removing 5'-extranucleotides from tRNA precursor.. Its function is as follows. RNaseP catalyzes the removal of the 5'-leader sequence from pre-tRNA to produce the mature 5'-terminus. It can also cleave other RNA substrates such as 4.5S RNA. The protein component plays an auxiliary but essential role in vivo by binding to the 5'-leader sequence and broadening the substrate specificity of the ribozyme. This Pseudomonas savastanoi pv. phaseolicola (strain 1448A / Race 6) (Pseudomonas syringae pv. phaseolicola (strain 1448A / Race 6)) protein is Ribonuclease P protein component.